A 159-amino-acid polypeptide reads, in one-letter code: Endoribonuclease YbeY (159 aa).

The Zn(2+) site is built by His125, His129, and His135.

The protein belongs to the endoribonuclease YbeY family. Requires Zn(2+) as cofactor.

The protein localises to the cytoplasm. In terms of biological role, single strand-specific metallo-endoribonuclease involved in late-stage 70S ribosome quality control and in maturation of the 3' terminus of the 16S rRNA. This Thermoanaerobacter pseudethanolicus (strain ATCC 33223 / 39E) (Clostridium thermohydrosulfuricum) protein is Endoribonuclease YbeY.